Here is an 871-residue protein sequence, read N- to C-terminus: Probable inorganic carbon transporter subunit DabA (871 aa).

C396, D398, H577, and C592 together coordinate Zn(2+).

Belongs to the inorganic carbon transporter (TC 9.A.2) DabA family. As to quaternary structure, forms a complex with DabB. The cofactor is Zn(2+).

The protein localises to the cell membrane. Part of an energy-coupled inorganic carbon pump. The chain is Probable inorganic carbon transporter subunit DabA from Bacillus subtilis (strain 168).